Consider the following 130-residue polypeptide: Small ribosomal subunit protein uS8 (130 aa).

It belongs to the universal ribosomal protein uS8 family. Part of the 30S ribosomal subunit. Contacts proteins S5 and S12.

Functionally, one of the primary rRNA binding proteins, it binds directly to 16S rRNA central domain where it helps coordinate assembly of the platform of the 30S subunit. The sequence is that of Small ribosomal subunit protein uS8 from Alcanivorax borkumensis (strain ATCC 700651 / DSM 11573 / NCIMB 13689 / SK2).